A 508-amino-acid chain; its full sequence is Aldehyde dehydrogenase family 7 member A1 (508 aa).

NAD(+) is bound at residue 244–249 (GSSKVG). Residue glutamate 266 is the Proton acceptor of the active site. The active-site Nucleophile is cysteine 300.

The protein belongs to the aldehyde dehydrogenase family. As to quaternary structure, homotetramer.

It carries out the reaction an aldehyde + NAD(+) + H2O = a carboxylate + NADH + 2 H(+). Its function is as follows. May play a role in fruit development. The sequence is that of Aldehyde dehydrogenase family 7 member A1 from Malus domestica (Apple).